A 187-amino-acid polypeptide reads, in one-letter code: Auxin-binding protein T92 (187 aa).

The N-terminal stretch at 1 to 20 (MARHIIILVAVFWFATAEAS) is a signal peptide. Cysteines 22 and 177 form a disulfide. Residues histidine 78, histidine 80, and glutamate 84 each contribute to the Zn(2+) site. A glycan (N-linked (GlcNAc...) asparagine) is linked at asparagine 117. Histidine 128 serves as a coordination point for Zn(2+). Positions 184–187 (KDEL) match the Prevents secretion from ER motif.

In terms of assembly, homodimer.

Its subcellular location is the endoplasmic reticulum lumen. In terms of biological role, this is probably a receptor for the plant hormone auxin. The protein is Auxin-binding protein T92 (T92) of Nicotiana tabacum (Common tobacco).